We begin with the raw amino-acid sequence, 472 residues long: Carboxypeptidase E (472 aa).

Positions 1–21 (MLHAMRPVLLVAALLAVTAHA) are cleaved as a signal peptide. Positions 39–359 (HYHNQAQLEA…KSIFEYVWKS (321 aa)) constitute a Peptidase M14 domain. Residues His-101 and Glu-104 each coordinate Zn(2+). Residue Asn-134 is glycosylated (N-linked (GlcNAc...) asparagine). A Zn(2+)-binding site is contributed by His-232. Residue Glu-329 is the Proton donor/acceptor of the active site. N-linked (GlcNAc...) asparagine glycans are attached at residues Asn-385 and Asn-428.

Belongs to the peptidase M14 family. Requires Zn(2+) as cofactor. As to expression, expression is restricted to the nervous system.

Its subcellular location is the cell projection. The protein resides in the axon. It localises to the perikaryon. It is found in the cytoplasmic vesicle. The protein localises to the secretory vesicle lumen. It carries out the reaction Release of C-terminal arginine or lysine residues from polypeptides.. In terms of biological role, during FMRFamide-like peptide (FaRPs or FLP) and neuropeptide-like protein (NLP) precursor processing, catalyzes the removal of Arg or Lys residues from the C-terminus following the initial endoprotease cleavage. By processing neuropeptides, modulates basal acetylcholine release at the ventral cord neuromuscular junctions. Involved in egg-laying, defecation and locomotion. By processing FLP neuropeptides, regulates the turning step of male mating behavior. Involved in reducing pharyngeal pumping in response to high CO(2) levels. The polypeptide is Carboxypeptidase E (Caenorhabditis elegans).